The sequence spans 603 residues: Penicillin-binding protein activator LpoA (603 aa).

An N-terminal signal peptide occupies residues 1–26; it reads MANMTPRKNSVTRLIAPVALALTLAA. The N-palmitoyl cysteine moiety is linked to residue Cys-27. Cys-27 is lipidated: S-diacylglycerol cysteine.

It belongs to the LpoA family. As to quaternary structure, interacts with PBP1a.

It is found in the cell outer membrane. Functionally, regulator of peptidoglycan synthesis that is essential for the function of penicillin-binding protein 1A (PBP1a). This is Penicillin-binding protein activator LpoA from Aliivibrio fischeri (strain ATCC 700601 / ES114) (Vibrio fischeri).